Here is a 214-residue protein sequence, read N- to C-terminus: Adenylate kinase (214 aa).

10 to 15 (GAGKGT) is an ATP binding site. The interval 30-59 (STGDMLRAAIKAGTELGKQAKSVIDAGQLV) is NMP. Residues threonine 31, arginine 36, 57-59 (QLV), 85-88 (GFPR), and glutamine 92 each bind AMP. Residues 122 to 159 (GRRAHLPSGRTYHNVYNPPKEEGKDDITGEELVVRDDD) are LID. ATP is bound by residues arginine 123 and 132–133 (TY). The AMP site is built by arginine 156 and arginine 167. Lysine 200 provides a ligand contact to ATP.

This sequence belongs to the adenylate kinase family. As to quaternary structure, monomer.

The protein resides in the cytoplasm. The enzyme catalyses AMP + ATP = 2 ADP. Its pathway is purine metabolism; AMP biosynthesis via salvage pathway; AMP from ADP: step 1/1. Catalyzes the reversible transfer of the terminal phosphate group between ATP and AMP. Plays an important role in cellular energy homeostasis and in adenine nucleotide metabolism. In Vibrio atlanticus (strain LGP32) (Vibrio splendidus (strain Mel32)), this protein is Adenylate kinase.